The chain runs to 180 residues: ATP-dependent protease subunit HslV (180 aa).

Residue threonine 7 is part of the active site. 3 residues coordinate Na(+): alanine 165, cysteine 168, and threonine 171.

It belongs to the peptidase T1B family. HslV subfamily. As to quaternary structure, a double ring-shaped homohexamer of HslV is capped on each side by a ring-shaped HslU homohexamer. The assembly of the HslU/HslV complex is dependent on binding of ATP.

It localises to the cytoplasm. It carries out the reaction ATP-dependent cleavage of peptide bonds with broad specificity.. Its activity is regulated as follows. Allosterically activated by HslU binding. Protease subunit of a proteasome-like degradation complex believed to be a general protein degrading machinery. This Geobacillus kaustophilus (strain HTA426) protein is ATP-dependent protease subunit HslV.